The sequence spans 207 residues: Chloramphenicol acetyltransferase (207 aa).

Residue histidine 186 is the Proton acceptor of the active site.

The protein belongs to the chloramphenicol acetyltransferase family. In terms of assembly, homotrimer.

It carries out the reaction chloramphenicol + acetyl-CoA = chloramphenicol 3-acetate + CoA. Functionally, this enzyme is an effector of chloramphenicol resistance in bacteria. This chain is Chloramphenicol acetyltransferase, found in Campylobacter coli.